A 487-amino-acid chain; its full sequence is ATP synthase subunit beta (487 aa).

164–171 (GGAGVGKT) is an ATP binding site.

Belongs to the ATPase alpha/beta chains family. As to quaternary structure, F-type ATPases have 2 components, CF(1) - the catalytic core - and CF(0) - the membrane proton channel. CF(1) has five subunits: alpha(3), beta(3), gamma(1), delta(1), epsilon(1). CF(0) has four main subunits: a(1), b(1), b'(1) and c(9-12).

The protein resides in the cellular thylakoid membrane. It carries out the reaction ATP + H2O + 4 H(+)(in) = ADP + phosphate + 5 H(+)(out). Functionally, produces ATP from ADP in the presence of a proton gradient across the membrane. The catalytic sites are hosted primarily by the beta subunits. The chain is ATP synthase subunit beta from Synechococcus sp. (strain CC9311).